The sequence spans 256 residues: Na(+)-translocating NADH-quinone reductase subunit E (256 aa).

The next 6 membrane-spanning stretches (helical) occupy residues 1–21 (MWLGAYTWLNVFGILLQAAFI), 50–70 (MSVALVLTVTGSINWFVHAFI), 83–103 (LASVNLGFLELIIFIVVIAAF), 123–143 (GIFLPLIAVNCAILGGVLFGI), 149–169 (FIPMMIFSLGAGCGWWLAIVI), and 189–209 (MGISFITTGLIAMAFMSLTGI). Residues 229 to 249 (ENTTNPLKESSSKHQPSISKA) are compositionally biased toward polar residues. The interval 229 to 256 (ENTTNPLKESSSKHQPSISKARTQRRSL) is disordered.

It belongs to the NqrDE/RnfAE family. In terms of assembly, composed of six subunits; NqrA, NqrB, NqrC, NqrD, NqrE and NqrF.

It is found in the cell inner membrane. The catalysed reaction is a ubiquinone + n Na(+)(in) + NADH + H(+) = a ubiquinol + n Na(+)(out) + NAD(+). Its function is as follows. NQR complex catalyzes the reduction of ubiquinone-1 to ubiquinol by two successive reactions, coupled with the transport of Na(+) ions from the cytoplasm to the periplasm. NqrA to NqrE are probably involved in the second step, the conversion of ubisemiquinone to ubiquinol. This Chlamydia pneumoniae (Chlamydophila pneumoniae) protein is Na(+)-translocating NADH-quinone reductase subunit E.